The chain runs to 370 residues: MLPRLVCISDYEQHVRSVLQKSVYDYYRSGANDQETLADNIQAFSRWKLYPRMLRNVADIDLSTSVLGQRVSMPICVGATAMQCMAHVDGELATVRACQTMGTGMMLSSWATSSIEEVAEAGPEALRWMQLYIYKDREISRQIVKRAEKQGYKAIFVTVDTPYLGNRIDDVRNRFKLPPQLRMKNFETNDLAFSPKGNFGDNSGLAEYVAQAIDPSLSWDDITWLRRLTSLPIVVKGILRGDDAKEAVKHGVDGILVSNHGARQLDGVPATIDVLPEIVEAVEGKVEVFLDGGVRKGTDVLKALALGAKAVFVGRPIIWGLAFQGEKGVQDVLEILKEEFRLAMALSGCQNVKVIDKTLVRKNPLAVSKI.

An FMN hydroxy acid dehydrogenase domain is found at 1 to 365 (MLPRLVCISD…DKTLVRKNPL (365 aa)). Residue tyrosine 26 coordinates glyoxylate. Residues 79 to 81 (ATA), serine 108, and glutamine 130 contribute to the FMN site. Tyrosine 132 is a binding site for glyoxylate. Threonine 158 is an FMN binding site. Arginine 167 is a glyoxylate binding site. The residue at position 184 (lysine 184) is an N6-succinyllysine. Serine 194 and serine 230 each carry phosphoserine. 2 residues coordinate FMN: lysine 236 and serine 258. The glyoxylate site is built by histidine 260 and arginine 263. The active-site Proton acceptor is histidine 260. FMN contacts are provided by residues 291-295 (DGGVR) and 314-315 (GR). The short motif at 368–370 (SKI) is the Microbody targeting signal element.

The protein belongs to the FMN-dependent alpha-hydroxy acid dehydrogenase family. In terms of assembly, homotetramer. Requires FMN as cofactor. Liver.

It is found in the peroxisome matrix. It carries out the reaction a (2S)-2-hydroxycarboxylate + O2 = a 2-oxocarboxylate + H2O2. It catalyses the reaction glycolate + O2 = glyoxylate + H2O2. The enzyme catalyses glyoxylate + O2 + H2O = oxalate + H2O2 + H(+). The catalysed reaction is 2-hydroxyhexadecanoate + O2 = 2-oxohexadecanoate + H2O2. It carries out the reaction 2-hydroxyoctanoate + O2 = 2-oxooctanoate + H2O2. The protein operates within amino-acid biosynthesis; glycine biosynthesis. In terms of biological role, broad substrate specificity (S)-2-hydroxy-acid oxidase that preferentially oxidizes glycolate. The glyoxylate produced by the oxidation of glycolate can then be utilized by alanine-glyoxylate aminotransferase for the peroxisomal synthesis of glycine; this pathway appears to be an important step for the detoxification of glyoxylate which, if allowed to accumulate, may be metabolized to oxalate with formation of kidney stones. Can also catalyze the oxidation glyoxylate, and long chain hydroxyacids such as 2-hydroxyhexadecanoate and 2-hydroxyoctanoate. Active in vitro with the artificial electron acceptor 2,6-dichlorophenolindophenol (DCIP), but O2 is believed to be the physiological electron acceptor, leading to the production of H2O2. This chain is 2-Hydroxyacid oxidase 1, found in Mus musculus (Mouse).